A 622-amino-acid polypeptide reads, in one-letter code: Polygalacturonase 1 beta-like protein 1 (622 aa).

An N-terminal signal peptide occupies residues 1 to 21 (MRKQFVFLLPFLSRLYHVVIA). The stretch at 118 to 121 (FSVY) is one FXXY 1 repeat. Asn125 carries N-linked (GlcNAc...) asparagine glycosylation. FXXY repeat units lie at residues 126–129 (FTNY), 140–143 (FKKY), 154–157 (FRRY), 168–171 (FTGY), 182–185 (FNSY), 196–199 (FKNY), 210–213 (FKAY), 224–227 (FKTY), 239–242 (FTSY), 253–256 (FSSY), and 267–270 (FSNY). Asn278 carries N-linked (GlcNAc...) asparagine glycosylation. FXXY repeat units follow at residues 281-284 (FKGY), 295-298 (FKSY), 309-312 (FLNY), 323-326 (FSSY), 337-340 (FVNY), 351-354 (FSGY), and 365-368 (FKTY). Asn371 carries N-linked (GlcNAc...) asparagine glycosylation. 2 FXXY repeats span residues 374–377 (FKDY) and 384–387 (FAKY). Asn388 and Asn461 each carry an N-linked (GlcNAc...) asparagine glycan. A BURP domain is found at 407–621 (FFRESMLKEG…FENDMNWAIA (215 aa)).

Expressed in flowers and stems.

It is found in the secreted. It localises to the extracellular space. Its subcellular location is the apoplast. The protein localises to the cell wall. Involved in cell size determination. The chain is Polygalacturonase 1 beta-like protein 1 from Arabidopsis thaliana (Mouse-ear cress).